A 110-amino-acid chain; its full sequence is ORC1-type DNA replication protein 3 (110 aa).

Residue 8-12 coordinates ATP; that stretch reads SGKSL.

This sequence belongs to the CDC6/cdc18 family.

Its function is as follows. Involved in regulation of DNA replication. This chain is ORC1-type DNA replication protein 3 (orc3), found in Halobacterium salinarum (strain ATCC 700922 / JCM 11081 / NRC-1) (Halobacterium halobium).